Here is a 217-residue protein sequence, read N- to C-terminus: Cytidylate kinase (217 aa).

10–18 (GPAGAGKST) contributes to the ATP binding site.

The protein belongs to the cytidylate kinase family. Type 1 subfamily.

The protein resides in the cytoplasm. It carries out the reaction CMP + ATP = CDP + ADP. The catalysed reaction is dCMP + ATP = dCDP + ADP. This Clostridium botulinum (strain Okra / Type B1) protein is Cytidylate kinase.